Consider the following 262-residue polypeptide: Acyl-[acyl-carrier-protein]--UDP-N-acetylglucosamine O-acyltransferase (262 aa).

This sequence belongs to the transferase hexapeptide repeat family. LpxA subfamily. As to quaternary structure, homotrimer.

The protein localises to the cytoplasm. It catalyses the reaction a (3R)-hydroxyacyl-[ACP] + UDP-N-acetyl-alpha-D-glucosamine = a UDP-3-O-[(3R)-3-hydroxyacyl]-N-acetyl-alpha-D-glucosamine + holo-[ACP]. The protein operates within glycolipid biosynthesis; lipid IV(A) biosynthesis; lipid IV(A) from (3R)-3-hydroxytetradecanoyl-[acyl-carrier-protein] and UDP-N-acetyl-alpha-D-glucosamine: step 1/6. Its function is as follows. Involved in the biosynthesis of lipid A, a phosphorylated glycolipid that anchors the lipopolysaccharide to the outer membrane of the cell. In Klebsiella pneumoniae (strain 342), this protein is Acyl-[acyl-carrier-protein]--UDP-N-acetylglucosamine O-acyltransferase.